An 87-amino-acid chain; its full sequence is Putative regulatory protein ABC2323 (87 aa).

It belongs to the RemA family.

The sequence is that of Putative regulatory protein ABC2323 from Shouchella clausii (strain KSM-K16) (Alkalihalobacillus clausii).